The chain runs to 156 residues: Small ribosomal subunit protein uS7 (156 aa).

Belongs to the universal ribosomal protein uS7 family. In terms of assembly, part of the 30S ribosomal subunit. Contacts proteins S9 and S11.

Functionally, one of the primary rRNA binding proteins, it binds directly to 16S rRNA where it nucleates assembly of the head domain of the 30S subunit. Is located at the subunit interface close to the decoding center, probably blocks exit of the E-site tRNA. This is Small ribosomal subunit protein uS7 from Carsonella ruddii.